The primary structure comprises 1087 residues: Exportin-7-B (1087 aa).

The region spanning 30–96 is the Importin N-terminal domain; sequence AEKALVEFTN…RNYVLTYLAT (67 aa).

It belongs to the exportin family.

The protein resides in the cytoplasm. It is found in the nucleus. Functionally, mediates the nuclear export of proteins (cargos) with broad substrate specificity. The protein is Exportin-7-B (xpo7-b) of Xenopus laevis (African clawed frog).